A 122-amino-acid chain; its full sequence is MARIAGVNIPTAKRVVIALQYIHGIGPKKAEEITEKVGIPAERRVNQLTDAEVLQIRETIDRDYLVEGDLRREVSMNIKRLMDLGCYRGLRHRKQLPVRGQRTHTNARTRKGKAKPIAGKKK.

The disordered stretch occupies residues 94–122 (KQLPVRGQRTHTNARTRKGKAKPIAGKKK).

This sequence belongs to the universal ribosomal protein uS13 family. Part of the 30S ribosomal subunit. Forms a loose heterodimer with protein S19. Forms two bridges to the 50S subunit in the 70S ribosome.

In terms of biological role, located at the top of the head of the 30S subunit, it contacts several helices of the 16S rRNA. In the 70S ribosome it contacts the 23S rRNA (bridge B1a) and protein L5 of the 50S subunit (bridge B1b), connecting the 2 subunits; these bridges are implicated in subunit movement. Contacts the tRNAs in the A and P-sites. The sequence is that of Small ribosomal subunit protein uS13 from Methylorubrum populi (strain ATCC BAA-705 / NCIMB 13946 / BJ001) (Methylobacterium populi).